The following is a 299-amino-acid chain: Tetrahydromethanopterin S-methyltransferase subunit E (299 aa).

6 helical membrane passes run 57-77, 80-100, 133-153, 158-178, 226-246, and 262-282; these read AISG…TIAW, INAG…AAIV, IGPI…AAYL, LGNP…VGAI, YFCS…IIFL, and VTKT…AAVI.

Belongs to the MtrE family. As to quaternary structure, the complex is composed of 8 subunits; MtrA, MtrB, MtrC, MtrD, MtrE, MtrF, MtrG and MtrH.

It is found in the cell membrane. The enzyme catalyses 5-methyl-5,6,7,8-tetrahydromethanopterin + coenzyme M + 2 Na(+)(in) = 5,6,7,8-tetrahydromethanopterin + methyl-coenzyme M + 2 Na(+)(out). The protein operates within one-carbon metabolism; methanogenesis from CO(2); methyl-coenzyme M from 5,10-methylene-5,6,7,8-tetrahydromethanopterin: step 2/2. In terms of biological role, part of a complex that catalyzes the formation of methyl-coenzyme M and tetrahydromethanopterin from coenzyme M and methyl-tetrahydromethanopterin. This is an energy-conserving, sodium-ion translocating step. This chain is Tetrahydromethanopterin S-methyltransferase subunit E, found in Methanococcus maripaludis (strain C7 / ATCC BAA-1331).